The sequence spans 318 residues: Methionyl-tRNA formyltransferase (318 aa).

A (6S)-5,6,7,8-tetrahydrofolate-binding site is contributed by 112-115 (SILP).

This sequence belongs to the Fmt family.

It catalyses the reaction L-methionyl-tRNA(fMet) + (6R)-10-formyltetrahydrofolate = N-formyl-L-methionyl-tRNA(fMet) + (6S)-5,6,7,8-tetrahydrofolate + H(+). Its function is as follows. Attaches a formyl group to the free amino group of methionyl-tRNA(fMet). The formyl group appears to play a dual role in the initiator identity of N-formylmethionyl-tRNA by promoting its recognition by IF2 and preventing the misappropriation of this tRNA by the elongation apparatus. The polypeptide is Methionyl-tRNA formyltransferase (Shewanella sp. (strain W3-18-1)).